The chain runs to 222 residues: U-scoloptoxin(11)-Sm5a (222 aa).

It belongs to the scoloptoxin-11 family. Post-translationally, contains 8 disulfide bonds. As to expression, expressed by the venom gland.

It localises to the secreted. This chain is U-scoloptoxin(11)-Sm5a, found in Scolopendra morsitans (Tanzanian blue ringleg centipede).